Here is a 232-residue protein sequence, read N- to C-terminus: Flagellar L-ring protein (232 aa).

The N-terminal stretch at methionine 1–glycine 15 is a signal peptide. The N-palmitoyl cysteine moiety is linked to residue cysteine 16. Cysteine 16 is lipidated: S-diacylglycerol cysteine.

The protein belongs to the FlgH family. The basal body constitutes a major portion of the flagellar organelle and consists of four rings (L,P,S, and M) mounted on a central rod.

It localises to the cell outer membrane. Its subcellular location is the bacterial flagellum basal body. Its function is as follows. Assembles around the rod to form the L-ring and probably protects the motor/basal body from shearing forces during rotation. The sequence is that of Flagellar L-ring protein from Campylobacter jejuni subsp. jejuni serotype O:23/36 (strain 81-176).